Consider the following 258-residue polypeptide: NAD-dependent protein deacylase (258 aa).

Residues 3–258 (ERQLEKSIEH…LPALMRGLSA (256 aa)) form the Deacetylase sirtuin-type domain. NAD(+) is bound at residue 28-48 (GAGMSADSGLETYRDDKTGLW). Y73 and R76 together coordinate substrate. Residue 109-112 (QNID) participates in NAD(+) binding. The active-site Proton acceptor is H127. Zn(2+)-binding residues include C135, C138, C161, and C164. Residues 201–203 (GTS) and A245 each bind NAD(+).

This sequence belongs to the sirtuin family. Class III subfamily. Zn(2+) serves as cofactor.

The protein localises to the cytoplasm. It carries out the reaction N(6)-acetyl-L-lysyl-[protein] + NAD(+) + H2O = 2''-O-acetyl-ADP-D-ribose + nicotinamide + L-lysyl-[protein]. The enzyme catalyses N(6)-succinyl-L-lysyl-[protein] + NAD(+) + H2O = 2''-O-succinyl-ADP-D-ribose + nicotinamide + L-lysyl-[protein]. Functionally, NAD-dependent lysine deacetylase and desuccinylase that specifically removes acetyl and succinyl groups on target proteins. Modulates the activities of several proteins which are inactive in their acylated form. In Corynebacterium glutamicum (strain ATCC 13032 / DSM 20300 / JCM 1318 / BCRC 11384 / CCUG 27702 / LMG 3730 / NBRC 12168 / NCIMB 10025 / NRRL B-2784 / 534), this protein is NAD-dependent protein deacylase.